The primary structure comprises 172 residues: UPF0102 protein Pcryo_2198 (172 aa).

Belongs to the UPF0102 family.

In Psychrobacter cryohalolentis (strain ATCC BAA-1226 / DSM 17306 / VKM B-2378 / K5), this protein is UPF0102 protein Pcryo_2198.